A 156-amino-acid polypeptide reads, in one-letter code: Small ribosomal subunit protein uS7 (156 aa).

This sequence belongs to the universal ribosomal protein uS7 family. As to quaternary structure, part of the 30S ribosomal subunit. Contacts proteins S9 and S11.

Functionally, one of the primary rRNA binding proteins, it binds directly to 16S rRNA where it nucleates assembly of the head domain of the 30S subunit. Is located at the subunit interface close to the decoding center, probably blocks exit of the E-site tRNA. This Nocardioides sp. (strain ATCC BAA-499 / JS614) protein is Small ribosomal subunit protein uS7.